The following is a 338-amino-acid chain: Histidinol-phosphate aminotransferase (338 aa).

Lys204 bears the N6-(pyridoxal phosphate)lysine mark.

Belongs to the class-II pyridoxal-phosphate-dependent aminotransferase family. Histidinol-phosphate aminotransferase subfamily. Requires pyridoxal 5'-phosphate as cofactor.

It catalyses the reaction L-histidinol phosphate + 2-oxoglutarate = 3-(imidazol-4-yl)-2-oxopropyl phosphate + L-glutamate. It participates in amino-acid biosynthesis; L-histidine biosynthesis; L-histidine from 5-phospho-alpha-D-ribose 1-diphosphate: step 7/9. This chain is Histidinol-phosphate aminotransferase, found in Pyrococcus furiosus (strain ATCC 43587 / DSM 3638 / JCM 8422 / Vc1).